The following is a 378-amino-acid chain: Trans-enoyl reductase poxP (378 aa).

Residue 62-65 (CDWK) participates in NADP(+) binding. A substrate-binding site is contributed by 151–158 (SVFATLWI). NADP(+) is bound by residues 187 to 190 (STST), 210 to 213 (SPHN), tyrosine 228, and 275 to 276 (LE). 295–299 (GLAAS) provides a ligand contact to substrate. Residue 364-365 (TS) coordinates NADP(+).

The protein belongs to the zinc-containing alcohol dehydrogenase family. In terms of assembly, monomer.

Its pathway is secondary metabolite biosynthesis. Functionally, trans-enoyl reductase; part of the gene cluster that mediates the biosynthesis of oxaleimides, cytotoxic compounds containing an unusual disubstituted succinimide moiety. The first step of the pathway is provided by the HR-PKS poxF that serves in a new mode of collaborative biosynthesis with the PKS-NRPS poxE, by providing the olefin containing amino acid substrate via the synthesis of an ACP-bound dec-4-enoate. The cytochrome P450 monooxygenase poxM-catalyzed oxidation at the alpha-position creates the enzyme-bound 2-hydroxydec-4-enoyl-ACP thioester, which may be prone to spontaneous hydrolysis to yield 2-hydroxydec-4-enoic acid due to increased electrophilicity of the carbonyl. 2-hydroxydec-4-enoic acid can then be further oxidized by poxM to yield the alpha-ketoacid 2-oxodec-4-enoicacid, which is reductively aminated by the aminotransferase poxL to yield (S,E)-2-aminodec-4-enoic acid. The Hybrid PKS-NRPS synthetase poxE then performs condensation between the octaketide product of its PKS modules and the amino group of (S,E)-2-aminodec-4-enoic acid which is activated and incorporated by the adenylation domain. The resulting aminoacyl product can be cyclized by the Diels-Alderase PoxQ and reductively released by the reductive (R) domain of poxE to yield an aldehyde intermediate. The released aldehyde is then substrate for a Knoevenagel condensation by the hydrolyase poxO followed by an oxidation at the 5-position of the pyrrolidone ring. The presence of the olefin from the amino acid building block allows for migration of the substituted allyl group to occur. This allylic transposition reaction takes place in a conjugate addition, semipinacol-like fashion to yield a succinimide intermediate. Iterative two-electron oxidations of the C7 methyl of the succinimide intermediate to the carboxylic acid can be catalyzed by one of two remaining cytochrome P450 monooxygenasess poxC or poxD to yield oxaleimide A. Subsequent oxidation yields the maleimide scaffold oxaleimide I. Both oxaleimide A and oxaleimide I can undergo oxidative modifications in the decalin ring to yield the series of products oxaleimides B to H. The sequence is that of Trans-enoyl reductase poxP from Penicillium oxalicum.